Consider the following 237-residue polypeptide: Phosphoadenosine 5'-phosphosulfate reductase (237 aa).

Catalysis depends on C231, which acts as the Nucleophile; cysteine thiosulfonate intermediate.

It belongs to the PAPS reductase family. CysH subfamily.

It localises to the cytoplasm. It carries out the reaction [thioredoxin]-disulfide + sulfite + adenosine 3',5'-bisphosphate + 2 H(+) = [thioredoxin]-dithiol + 3'-phosphoadenylyl sulfate. It participates in sulfur metabolism; hydrogen sulfide biosynthesis; sulfite from sulfate: step 3/3. In terms of biological role, catalyzes the formation of sulfite from phosphoadenosine 5'-phosphosulfate (PAPS) using thioredoxin as an electron donor. This is Phosphoadenosine 5'-phosphosulfate reductase from Xylella fastidiosa (strain M23).